The sequence spans 373 residues: tRNA-specific 2-thiouridylase MnmA (373 aa).

ATP-binding positions include 12-19 (GMSGGVDS) and Met38. Positions 98–100 (NPD) are interaction with target base in tRNA. Cys103 serves as the catalytic Nucleophile. An intrachain disulfide couples Cys103 to Cys200. Residue Gly128 participates in ATP binding. The interaction with tRNA stretch occupies residues 150–152 (KDQ). The active-site Cysteine persulfide intermediate is the Cys200. Positions 312–313 (RY) are interaction with tRNA.

The protein belongs to the MnmA/TRMU family. In terms of assembly, interacts with TusE.

The protein resides in the cytoplasm. It catalyses the reaction S-sulfanyl-L-cysteinyl-[protein] + uridine(34) in tRNA + AH2 + ATP = 2-thiouridine(34) in tRNA + L-cysteinyl-[protein] + A + AMP + diphosphate + H(+). Functionally, catalyzes the 2-thiolation of uridine at the wobble position (U34) of tRNA(Lys), tRNA(Glu) and tRNA(Gln), leading to the formation of s(2)U34, the first step of tRNA-mnm(5)s(2)U34 synthesis. Sulfur is provided by IscS, via a sulfur-relay system. Binds ATP and its substrate tRNAs. The sequence is that of tRNA-specific 2-thiouridylase MnmA from Yersinia enterocolitica serotype O:8 / biotype 1B (strain NCTC 13174 / 8081).